The chain runs to 116 residues: Immunoglobulin heavy variable 3-66 (116 aa).

The N-terminal stretch at 1-19 is a signal peptide; that stretch reads MEFGLSWVFLVAILKGVQC. The tract at residues 20 to 44 is framework-1; the sequence is EVQLVESGGGLIQPGGSLRLSCAAS. The region spanning 20 to 116 is the Ig-like domain; that stretch reads EVQLVESGGG…EDTAVYYCAR (97 aa). The cysteines at positions 41 and 114 are disulfide-linked. The complementarity-determining-1 stretch occupies residues 45-52; the sequence is GFTVSSNY. Residues 53-69 are framework-2; sequence MSWVRQAPGKGLEWVSV. The segment at 70 to 76 is complementarity-determining-2; that stretch reads IYSCGST. The segment at 77 to 114 is framework-3; the sequence is YYADSVKGRFTISRDNSKNTLYLQMNSLRAEDTAVYYC. The segment at 115–116 is complementarity-determining-3; that stretch reads AR.

In terms of assembly, immunoglobulins are composed of two identical heavy chains and two identical light chains; disulfide-linked.

The protein resides in the secreted. The protein localises to the cell membrane. Functionally, v region of the variable domain of immunoglobulin heavy chains that participates in the antigen recognition. Immunoglobulins, also known as antibodies, are membrane-bound or secreted glycoproteins produced by B lymphocytes. In the recognition phase of humoral immunity, the membrane-bound immunoglobulins serve as receptors which, upon binding of a specific antigen, trigger the clonal expansion and differentiation of B lymphocytes into immunoglobulins-secreting plasma cells. Secreted immunoglobulins mediate the effector phase of humoral immunity, which results in the elimination of bound antigens. The antigen binding site is formed by the variable domain of one heavy chain, together with that of its associated light chain. Thus, each immunoglobulin has two antigen binding sites with remarkable affinity for a particular antigen. The variable domains are assembled by a process called V-(D)-J rearrangement and can then be subjected to somatic hypermutations which, after exposure to antigen and selection, allow affinity maturation for a particular antigen. The chain is Immunoglobulin heavy variable 3-66 from Homo sapiens (Human).